We begin with the raw amino-acid sequence, 562 residues long: MDCISTKNNKINKIKFSITIIAFILLYYLIPLNYRDLWQPDETRYAEISREMLQNKNWSIPYLLDIRYFEKPIFGYWINSISQFFFGHNNFSVRFGSFLFTLFSANLIYLFSKKIWKNKILSLNSVIIFLSILLVYIIGTYSVLDSIISFWINLSMISFWLASTSKVKKYKIKNYIILGISIGIGFITKGFISLLIPFISIFIWLFLTKININKTIIHCFFSLLISILIIFPWIYKISYLEKDFIRYFIFIEHIQRFIGENAQHKSPFWYYFPIFIIGCLPWSGFLFSTLNLAWNTRKNKKIEFYLLLWIIVQFCFFSISKGKLPTYILPCFFPLSILIAKNIEKCNLKNKKKLLKINSIINTIVGSTLLIFIILHEKYKFFGCSLYNKNEYYKLILCIFSIFVWIFLNLCIIFNDFKFWRITSLSIIGIAFLFGLYVPEKIIYAKQPQLFIKEVFDDLESSDFIFSNNIGLSTAISWEIKKNNIFIFENKGELEYGLSYLDSKHRFIKKEDFKNWLSKNKEKKISLVMLLPDKHYNWKKFNVPETKKFFQHERLILLKYNF.

The next 12 membrane-spanning stretches (helical) occupy residues 14 to 34 (IKFS…PLNY), 91 to 111 (FSVR…IYLF), 120 to 140 (ILSL…IIGT), 142 to 162 (SVLD…FWLA), 186 to 206 (FITK…IWLF), 215 to 235 (TIIH…PWIY), 267 to 287 (PFWY…GFLF), 302 to 322 (IEFY…ISKG), 324 to 344 (LPTY…KNIE), 354 to 374 (LLKI…IFII), 395 to 415 (LILC…IIFN), and 425 to 445 (LSII…IIYA).

This sequence belongs to the glycosyltransferase 83 family.

The protein localises to the cell inner membrane. The catalysed reaction is 4-amino-4-deoxy-alpha-L-arabinopyranosyl di-trans,octa-cis-undecaprenyl phosphate + lipid IVA = lipid IIA + di-trans,octa-cis-undecaprenyl phosphate.. It participates in lipopolysaccharide metabolism; 4-amino-4-deoxy-beta-L-arabinose-lipid A biosynthesis. Its function is as follows. Catalyzes the transfer of the L-Ara4N moiety of the glycolipid undecaprenyl phosphate-alpha-L-Ara4N to lipid A. The modified arabinose is attached to lipid A and is required for resistance to polymyxin and cationic antimicrobial peptides. This is Undecaprenyl phosphate-alpha-4-amino-4-deoxy-L-arabinose arabinosyl transferase from Wigglesworthia glossinidia brevipalpis.